The primary structure comprises 146 residues: MAAKKKVVTQIKLQCPAGKATPAPPVGPALGPHGVSAPQFVQQFNDRTKSMEPGLVVPVVVTVYSDKSFSFVLKTPPAAVLIRKACGIEKGSTNSVKQKVARLSLAQLTEIAQVKLPDMSALTLDAAKRIIAGTARSMGVEVERSL.

It belongs to the universal ribosomal protein uL11 family. As to quaternary structure, part of the ribosomal stalk of the 50S ribosomal subunit. Interacts with L10 and the large rRNA to form the base of the stalk. L10 forms an elongated spine to which L12 dimers bind in a sequential fashion forming a multimeric L10(L12)X complex. Post-translationally, one or more lysine residues are methylated.

Its function is as follows. Forms part of the ribosomal stalk which helps the ribosome interact with GTP-bound translation factors. The protein is Large ribosomal subunit protein uL11 of Treponema pallidum subsp. pallidum (strain SS14).